A 228-amino-acid polypeptide reads, in one-letter code: General odorant-binding protein 71 (228 aa).

An N-terminal signal peptide occupies residues 1–20 (MCGAIVLLLLVGTSPAPVEG). The interval 50-131 (TMGEWGQRDR…GNSSSSSSST (82 aa)) is disordered. Positions 55–72 (GQRDRNGEEQQMMRDYGR) are enriched in basic and acidic residues. Over residues 83–99 (GGQTSGSSSSGSAGEHS) the composition is skewed to low complexity. The segment covering 111-120 (AGQGGNGTRS) has biased composition (gly residues). The segment covering 121–131 (GGNSSSSSSST) has biased composition (low complexity). Intrachain disulfides connect C138–C199 and C185–C208.

Belongs to the PBP/GOBP family.

The protein resides in the secreted. Present in the aqueous fluid surrounding olfactory sensory dendrites and are thought to aid in the capture and transport of hydrophobic odorants into and through this fluid. The polypeptide is General odorant-binding protein 71 (Obp71) (Anopheles gambiae (African malaria mosquito)).